The sequence spans 177 residues: MSEFVTVARPYAKAAFDFAVEHQSVERWQDMLAFAAEVTKNEQMAELLSGALAPETLAESFIAVCGEQLDENGQNLIRVMAENNRLNALPDVLEQFIHLRAASESTSEVEVTSATALSEEQLAKISAAMEKRLSRKVKLNCKIDKSVMAGVIIRAGDMVIDGSVRGRLERLADVLQS.

The protein belongs to the ATPase delta chain family. F-type ATPases have 2 components, F(1) - the catalytic core - and F(0) - the membrane proton channel. F(1) has five subunits: alpha(3), beta(3), gamma(1), delta(1), epsilon(1). F(0) has three main subunits: a(1), b(2) and c(10-14). The alpha and beta chains form an alternating ring which encloses part of the gamma chain. F(1) is attached to F(0) by a central stalk formed by the gamma and epsilon chains, while a peripheral stalk is formed by the delta and b chains.

It is found in the cell inner membrane. Its function is as follows. F(1)F(0) ATP synthase produces ATP from ADP in the presence of a proton or sodium gradient. F-type ATPases consist of two structural domains, F(1) containing the extramembraneous catalytic core and F(0) containing the membrane proton channel, linked together by a central stalk and a peripheral stalk. During catalysis, ATP synthesis in the catalytic domain of F(1) is coupled via a rotary mechanism of the central stalk subunits to proton translocation. In terms of biological role, this protein is part of the stalk that links CF(0) to CF(1). It either transmits conformational changes from CF(0) to CF(1) or is implicated in proton conduction. This chain is ATP synthase subunit delta, found in Citrobacter koseri (strain ATCC BAA-895 / CDC 4225-83 / SGSC4696).